Reading from the N-terminus, the 226-residue chain is Glutathione peroxidase 3 (226 aa).

The N-terminal stretch at 1 to 24 (MARILRASCLLSLLLAGFVPPGRG) is a signal peptide. The active site involves selenocysteine 73. Position 73 (selenocysteine 73) is a non-standard amino acid, selenocysteine.

The protein belongs to the glutathione peroxidase family. In terms of assembly, homotetramer. As to expression, secreted in plasma.

The protein resides in the secreted. The catalysed reaction is 2 glutathione + H2O2 = glutathione disulfide + 2 H2O. It carries out the reaction tert-butyl hydroperoxide + 2 glutathione = tert-butanol + glutathione disulfide + H2O. Its function is as follows. Protects cells and enzymes from oxidative damage, by catalyzing the reduction of hydrogen peroxide, lipid peroxides and organic hydroperoxide, by glutathione. In Rattus norvegicus (Rat), this protein is Glutathione peroxidase 3.